Consider the following 172-residue polypeptide: Shikimate kinase (172 aa).

Position 11 to 16 (11 to 16) interacts with ATP; sequence ASGKTE. T15 is a binding site for Mg(2+). Residues D33, R57, and G80 each coordinate substrate. R120 provides a ligand contact to ATP. R142 contributes to the substrate binding site.

Belongs to the shikimate kinase family. As to quaternary structure, monomer. Mg(2+) is required as a cofactor.

The protein localises to the cytoplasm. It carries out the reaction shikimate + ATP = 3-phosphoshikimate + ADP + H(+). It functions in the pathway metabolic intermediate biosynthesis; chorismate biosynthesis; chorismate from D-erythrose 4-phosphate and phosphoenolpyruvate: step 5/7. Its function is as follows. Catalyzes the specific phosphorylation of the 3-hydroxyl group of shikimic acid using ATP as a cosubstrate. This is Shikimate kinase from Flavobacterium psychrophilum (strain ATCC 49511 / DSM 21280 / CIP 103535 / JIP02/86).